Consider the following 196-residue polypeptide: Probable nicotinate-nucleotide adenylyltransferase (196 aa).

This sequence belongs to the NadD family.

It carries out the reaction nicotinate beta-D-ribonucleotide + ATP + H(+) = deamido-NAD(+) + diphosphate. The protein operates within cofactor biosynthesis; NAD(+) biosynthesis; deamido-NAD(+) from nicotinate D-ribonucleotide: step 1/1. Catalyzes the reversible adenylation of nicotinate mononucleotide (NaMN) to nicotinic acid adenine dinucleotide (NaAD). The polypeptide is Probable nicotinate-nucleotide adenylyltransferase (Caldicellulosiruptor bescii (strain ATCC BAA-1888 / DSM 6725 / KCTC 15123 / Z-1320) (Anaerocellum thermophilum)).